Here is a 204-residue protein sequence, read N- to C-terminus: uncharacterized protein (204 aa).

The protein localises to the cytoplasm. Its subcellular location is the nucleus. This is an uncharacterized protein from Schizosaccharomyces pombe (strain 972 / ATCC 24843) (Fission yeast).